The following is a 123-amino-acid chain: S-adenosylmethionine decarboxylase proenzyme 2 (123 aa).

Residue serine 65 is the Schiff-base intermediate with substrate; via pyruvic acid of the active site. Serine 65 carries the pyruvic acid (Ser); by autocatalysis modification. Catalysis depends on histidine 70, which acts as the Proton acceptor; for processing activity. Cysteine 85 functions as the Proton donor; for catalytic activity in the catalytic mechanism.

Belongs to the prokaryotic AdoMetDC family. Type 1 subfamily. As to quaternary structure, heterotetramer of two alpha and two beta chains arranged as a dimer of alpha/beta heterodimers. Requires pyruvate as cofactor. Is synthesized initially as an inactive proenzyme. Formation of the active enzyme involves a self-maturation process in which the active site pyruvoyl group is generated from an internal serine residue via an autocatalytic post-translational modification. Two non-identical subunits are generated from the proenzyme in this reaction, and the pyruvate is formed at the N-terminus of the alpha chain, which is derived from the carboxyl end of the proenzyme. The post-translation cleavage follows an unusual pathway, termed non-hydrolytic serinolysis, in which the side chain hydroxyl group of the serine supplies its oxygen atom to form the C-terminus of the beta chain, while the remainder of the serine residue undergoes an oxidative deamination to produce ammonia and the pyruvoyl group blocking the N-terminus of the alpha chain.

The catalysed reaction is S-adenosyl-L-methionine + H(+) = S-adenosyl 3-(methylsulfanyl)propylamine + CO2. Its pathway is amine and polyamine biosynthesis; S-adenosylmethioninamine biosynthesis; S-adenosylmethioninamine from S-adenosyl-L-methionine: step 1/1. Functionally, catalyzes the decarboxylation of S-adenosylmethionine to S-adenosylmethioninamine (dcAdoMet), the propylamine donor required for the synthesis of the polyamines spermine and spermidine from the diamine putrescine. In Bacillus anthracis, this protein is S-adenosylmethionine decarboxylase proenzyme 2.